A 552-amino-acid polypeptide reads, in one-letter code: Arginine--tRNA ligase (552 aa).

The short motif at Ala-123 to Arg-133 is the 'HIGH' region element.

The protein belongs to the class-I aminoacyl-tRNA synthetase family. As to quaternary structure, monomer.

The protein resides in the cytoplasm. The catalysed reaction is tRNA(Arg) + L-arginine + ATP = L-arginyl-tRNA(Arg) + AMP + diphosphate. This is Arginine--tRNA ligase from Chlorobium phaeovibrioides (strain DSM 265 / 1930) (Prosthecochloris vibrioformis (strain DSM 265)).